A 92-amino-acid chain; its full sequence is Progonadoliberin-1 (92 aa).

The signal sequence occupies residues M1–A23. A Pyrrolidone carboxylic acid modification is found at Q24. G33 is subject to Glycine amide.

Belongs to the GnRH family.

The protein localises to the secreted. Stimulates the secretion of gonadotropins. The sequence is that of Progonadoliberin-1 (GNRH1) from Gallus gallus (Chicken).